The primary structure comprises 282 residues: Phospholipid phosphatase 1 (282 aa).

Residues 1-6 (MFDKPR) are Cytoplasmic-facing. Positions 5 to 7 (PRL) match the PDZ-binding; involved in localization to the apical cell membrane motif. The chain crosses the membrane as a helical span at residues 7-27 (LPYVVLDVICVLLAGLPFIIL). Residues 28 to 53 (TSRHTPFQRGVFCTDESIKYPYREDT) are Extracellular-facing. A helical membrane pass occupies residues 54 to 74 (IPYALLGGIVIPFCIIVMITG). Residues 75–88 (ETLSVYFNVLHSNS) lie on the Cytoplasmic side of the membrane. Residues 89–109 (FVSNHYIATIYKAVGAFLFGA) traverse the membrane as a helical segment. The Extracellular segment spans residues 110 to 164 (SASQSLTDIAKYSIGRLRPHFLAVCNPDWSKINCSDGYIENFVCQGNEQKVREGR). The phosphatase sequence motif I stretch occupies residues 120-128 (KYSIGRLRP). N-linked (GlcNAc...) asparagine glycosylation occurs at Asn-142. Residues 165–185 (LSFYSGHSSFSMYCMLFVALY) form a helical membrane-spanning segment. Residues 168–171 (YSGH) are phosphatase sequence motif II. Catalysis depends on His-171, which acts as the Proton donors. The Cytoplasmic portion of the chain corresponds to 186-194 (LQARMKGDW). Residues 195-215 (ARLLRPMLQFGLVALSIYVGL) traverse the membrane as a helical segment. Residues 216–227 (SRVSDYKHHWSD) form a phosphatase sequence motif III region. Over 216–229 (SRVSDYKHHWSDVL) the chain is Extracellular. Catalysis depends on His-223, which acts as the Nucleophile. The helical transmembrane segment at 230–250 (IGLIQGAVVAILVVLYVTDFF) threads the bilayer. Residues 251–282 (KTTESNKERKEDSHTTLHETTNRQSYARNHEP) are Cytoplasmic-facing. A compositionally biased stretch (basic and acidic residues) spans 257–271 (KERKEDSHTTLHETT). The disordered stretch occupies residues 257–282 (KERKEDSHTTLHETTNRQSYARNHEP). The segment covering 272–282 (NRQSYARNHEP) has biased composition (polar residues).

This sequence belongs to the PA-phosphatase related phosphoesterase family. In terms of assembly, forms functional homodimers and homooligomers that are not required for substrate recognition and catalytic activity. Can also form heterooligomers with PLPP2 and PLPP3. In terms of processing, N-glycosylated. N-linked sugars are of the complex type. N-glycosylation is not required for the phosphatase activity.

The protein resides in the cell membrane. It is found in the apical cell membrane. It localises to the membrane raft. Its subcellular location is the membrane. The protein localises to the caveola. It carries out the reaction a 1,2-diacyl-sn-glycero-3-phosphate + H2O = a 1,2-diacyl-sn-glycerol + phosphate. The catalysed reaction is 1,2-dihexadecanoyl-sn-glycero-3-phosphate + H2O = 1,2-dihexadecanoyl-sn-glycerol + phosphate. It catalyses the reaction 1,2-di-(9Z-octadecenoyl)-sn-glycero-3-phosphate + H2O = 1,2-di-(9Z-octadecenoyl)-sn-glycerol + phosphate. The enzyme catalyses a monoacyl-sn-glycero-3-phosphate + H2O = a monoacylglycerol + phosphate. It carries out the reaction (9Z)-octadecenoyl-sn-glycero-3-phosphate + H2O = (9Z-octadecenoyl)-glycerol + phosphate. The catalysed reaction is a 1-acyl-sn-glycero-3-phosphate + H2O = a 1-acyl-sn-glycerol + phosphate. It catalyses the reaction 1-(9Z-octadecenoyl)-sn-glycero-3-phosphate + H2O = 1-(9Z-octadecenoyl)-sn-glycerol + phosphate. The enzyme catalyses a 1,2-diacyl-sn-glycerol 3-diphosphate + H2O = a 1,2-diacyl-sn-glycero-3-phosphate + phosphate + H(+). It carries out the reaction sphing-4-enine 1-phosphate + H2O = sphing-4-enine + phosphate. The catalysed reaction is an N-acylsphing-4-enine 1-phosphate + H2O = an N-acylsphing-4-enine + phosphate. It catalyses the reaction N-(octanoyl)-sphing-4-enine-1-phosphate + H2O = N-octanoylsphing-4-enine + phosphate. The enzyme catalyses N-(9Z-octadecenoyl)-ethanolamine phosphate + H2O = N-(9Z-octadecenoyl) ethanolamine + phosphate. It carries out the reaction 1-hexadecanoyl-2-(9Z-octadecenoyl)-sn-glycero-3-phosphate + H2O = 1-hexadecanoyl-2-(9Z-octadecenoyl)-sn-glycerol + phosphate. It participates in lipid metabolism; phospholipid metabolism. With respect to regulation, magnesium-independent phospholipid phosphatase. Insensitive to N-ethylmaleimide. Its function is as follows. Magnesium-independent phospholipid phosphatase of the plasma membrane that catalyzes the dephosphorylation of a variety of glycerolipid and sphingolipid phosphate esters including phosphatidate/PA, lysophosphatidate/LPA, diacylglycerol pyrophosphate/DGPP, sphingosine 1-phosphate/S1P and ceramide 1-phosphate/C1P. Also acts on N-oleoyl ethanolamine phosphate/N-(9Z-octadecenoyl)-ethanolamine phosphate, a potential physiological compound. Through its extracellular phosphatase activity allows both the hydrolysis and the cellular uptake of these bioactive lipid mediators from the milieu, regulating signal transduction in different cellular processes. It is for instance essential for the extracellular hydrolysis of S1P and subsequent conversion into intracellular S1P. Involved in the regulation of inflammation, platelets activation, cell proliferation and migration among other processes. May also have an intracellular activity to regulate phospholipid-mediated signaling pathways. The protein is Phospholipid phosphatase 1 of Rattus norvegicus (Rat).